Reading from the N-terminus, the 43-residue chain is Mu-conotoxin-like CalTx 12.2.1E (43 aa).

A propeptide is located at residue Arg1. 4 disulfide bridges follow: Cys4–Cys16, Cys11–Cys24, Cys18–Cys29, and Cys23–Cys35. Trp31 bears the 6'-bromotryptophan mark. A 4-hydroxyproline modification is found at Pro36. Trp40 is subject to 6'-bromotryptophan.

Expressed by the venom duct.

Its subcellular location is the secreted. Mu-conotoxins block voltage-gated sodium channels. This toxin reversibly blocks voltage-gated sodium channel in cephalopods, with no alteration in the voltage dependence of sodium conductance or on the kinetics of inactivation. This Californiconus californicus (California cone) protein is Mu-conotoxin-like CalTx 12.2.1E.